The sequence spans 92 residues: DNA-directed RNA polymerase subunit Rpo11 (92 aa).

Belongs to the archaeal Rpo11/eukaryotic RPB11/RPC19 RNA polymerase subunit family. As to quaternary structure, part of the RNA polymerase complex.

It localises to the cytoplasm. It catalyses the reaction RNA(n) + a ribonucleoside 5'-triphosphate = RNA(n+1) + diphosphate. Functionally, DNA-dependent RNA polymerase (RNAP) catalyzes the transcription of DNA into RNA using the four ribonucleoside triphosphates as substrates. The polypeptide is DNA-directed RNA polymerase subunit Rpo11 (Saccharolobus islandicus (strain Y.N.15.51 / Yellowstone #2) (Sulfolobus islandicus)).